We begin with the raw amino-acid sequence, 450 residues long: 23S rRNA (uracil(1939)-C(5))-methyltransferase RlmD (450 aa).

Residues 1–22 (MARNKGGLRFQPSGGARGPAIP) are disordered. One can recognise a TRAM domain in the interval 20-78 (AIPVGKKQRLTIERLAHDGRGIAHEAGMTWFVSGGLPGEELEARVLGARSKVVDARSER). [4Fe-4S] cluster contacts are provided by C91, C97, C100, and C179. 6 residues coordinate S-adenosyl-L-methionine: Q283, F312, N317, E333, D360, and D381. C407 functions as the Nucleophile in the catalytic mechanism.

The protein belongs to the class I-like SAM-binding methyltransferase superfamily. RNA M5U methyltransferase family. RlmD subfamily.

It carries out the reaction uridine(1939) in 23S rRNA + S-adenosyl-L-methionine = 5-methyluridine(1939) in 23S rRNA + S-adenosyl-L-homocysteine + H(+). Its function is as follows. Catalyzes the formation of 5-methyl-uridine at position 1939 (m5U1939) in 23S rRNA. The sequence is that of 23S rRNA (uracil(1939)-C(5))-methyltransferase RlmD from Pseudomonas aeruginosa (strain UCBPP-PA14).